The chain runs to 297 residues: UDP-3-O-acyl-N-acetylglucosamine deacetylase (297 aa).

Zn(2+) contacts are provided by His79, His238, and Asp242. The Proton donor role is filled by His265.

The protein belongs to the LpxC family. Zn(2+) serves as cofactor.

The catalysed reaction is a UDP-3-O-[(3R)-3-hydroxyacyl]-N-acetyl-alpha-D-glucosamine + H2O = a UDP-3-O-[(3R)-3-hydroxyacyl]-alpha-D-glucosamine + acetate. It participates in glycolipid biosynthesis; lipid IV(A) biosynthesis; lipid IV(A) from (3R)-3-hydroxytetradecanoyl-[acyl-carrier-protein] and UDP-N-acetyl-alpha-D-glucosamine: step 2/6. Functionally, catalyzes the hydrolysis of UDP-3-O-myristoyl-N-acetylglucosamine to form UDP-3-O-myristoylglucosamine and acetate, the committed step in lipid A biosynthesis. This Blochmanniella pennsylvanica (strain BPEN) protein is UDP-3-O-acyl-N-acetylglucosamine deacetylase.